The sequence spans 189 residues: dCTP deaminase (189 aa).

Residues 112–117 (KSTYAR), 136–138 (TLE), Q157, Y171, and Q181 each bind dCTP. The active-site Proton donor/acceptor is the E138.

Belongs to the dCTP deaminase family. In terms of assembly, homotrimer.

The catalysed reaction is dCTP + H2O + H(+) = dUTP + NH4(+). It functions in the pathway pyrimidine metabolism; dUMP biosynthesis; dUMP from dCTP (dUTP route): step 1/2. Catalyzes the deamination of dCTP to dUTP. In Paraburkholderia phymatum (strain DSM 17167 / CIP 108236 / LMG 21445 / STM815) (Burkholderia phymatum), this protein is dCTP deaminase.